Here is a 635-residue protein sequence, read N- to C-terminus: PTS system fructose-specific EIIABC component (635 aa).

The PTS EIIA type-2 domain maps to 5-149; it reads ELLTKHTIKL…DAIIDIINQH (145 aa). The active-site Tele-phosphohistidine intermediate; for EIIA activity is the histidine 67. Position 67 is a phosphohistidine; by HPr (histidine 67). Positions 149 to 168 are disordered; that stretch reads HDKDDDEEEEEEEAAPAPAG. Positions 152–162 are enriched in acidic residues; the sequence is DDDEEEEEEEA. The region spanning 172–267 is the PTS EIIB type-2 domain; sequence ILAVTACPTG…PQELIEKAMN (96 aa). The active-site Phosphocysteine intermediate; for EIIB activity is cysteine 178. Cysteine 178 is subject to Phosphocysteine; by EIIA. A disordered region spans residues 273–293; it reads YQGSGGGSAASNDDEEAKGKS. Residues 301-635 form the PTS EIIC type-2 domain; it reads FYKHLMSGVS…GIVKKPVTEK (335 aa). The next 9 helical transmembrane spans lie at 312–332, 350–370, 392–412, 428–448, 470–490, 511–531, 544–564, 569–589, and 608–628; these read MLPF…WGIH, FIGG…FIAM, NAGF…VILL, PVLI…QFVV, NLVL…GGPL, AAIM…TTIF, ITCY…FAAA, VIPA…FFRV, and MLYL…LGIV.

Its subcellular location is the cell membrane. It carries out the reaction D-fructose(out) + N(pros)-phospho-L-histidyl-[protein] = D-fructose 1-phosphate(in) + L-histidyl-[protein]. Its function is as follows. The phosphoenolpyruvate-dependent sugar phosphotransferase system (sugar PTS), a major carbohydrate active transport system, catalyzes the phosphorylation of incoming sugar substrates concomitantly with their translocation across the cell membrane. This system is involved in fructose transport. In Bacillus subtilis (strain 168), this protein is PTS system fructose-specific EIIABC component (fruA).